The following is a 383-amino-acid chain: Lipid-A-disaccharide synthase (383 aa).

The protein belongs to the LpxB family.

It catalyses the reaction a lipid X + a UDP-2-N,3-O-bis[(3R)-3-hydroxyacyl]-alpha-D-glucosamine = a lipid A disaccharide + UDP + H(+). It functions in the pathway bacterial outer membrane biogenesis; LPS lipid A biosynthesis. In terms of biological role, condensation of UDP-2,3-diacylglucosamine and 2,3-diacylglucosamine-1-phosphate to form lipid A disaccharide, a precursor of lipid A, a phosphorylated glycolipid that anchors the lipopolysaccharide to the outer membrane of the cell. The polypeptide is Lipid-A-disaccharide synthase (Myxococcus xanthus (strain DK1622)).